Reading from the N-terminus, the 472-residue chain is UDP-N-acetylmuramoyl-L-alanyl-D-glutamate--2,6-diaminopimelate ligase (472 aa).

Ser-21 lines the UDP-N-acetyl-alpha-D-muramoyl-L-alanyl-D-glutamate pocket. An ATP-binding site is contributed by 99–105; the sequence is GTNGKTS. Residues 143-144, Ser-170, Gln-176, and Arg-178 each bind UDP-N-acetyl-alpha-D-muramoyl-L-alanyl-D-glutamate; that span reads TT. Lys-210 carries the N6-carboxylysine modification. Residues Arg-367, 391–394, Gly-440, and Glu-444 each bind meso-2,6-diaminopimelate; that span reads DNPR. The Meso-diaminopimelate recognition motif motif lies at 391–394; the sequence is DNPR.

It belongs to the MurCDEF family. MurE subfamily. The cofactor is Mg(2+). Post-translationally, carboxylation is probably crucial for Mg(2+) binding and, consequently, for the gamma-phosphate positioning of ATP.

The protein localises to the cytoplasm. The enzyme catalyses UDP-N-acetyl-alpha-D-muramoyl-L-alanyl-D-glutamate + meso-2,6-diaminopimelate + ATP = UDP-N-acetyl-alpha-D-muramoyl-L-alanyl-gamma-D-glutamyl-meso-2,6-diaminopimelate + ADP + phosphate + H(+). It functions in the pathway cell wall biogenesis; peptidoglycan biosynthesis. Its function is as follows. Catalyzes the addition of meso-diaminopimelic acid to the nucleotide precursor UDP-N-acetylmuramoyl-L-alanyl-D-glutamate (UMAG) in the biosynthesis of bacterial cell-wall peptidoglycan. The sequence is that of UDP-N-acetylmuramoyl-L-alanyl-D-glutamate--2,6-diaminopimelate ligase from Anaplasma marginale (strain St. Maries).